Here is a 189-residue protein sequence, read N- to C-terminus: Peptidyl-tRNA hydrolase (189 aa).

Y14 lines the tRNA pocket. H19 functions as the Proton acceptor in the catalytic mechanism. TRNA-binding residues include F64, N66, and N112.

Belongs to the PTH family. As to quaternary structure, monomer.

The protein resides in the cytoplasm. It carries out the reaction an N-acyl-L-alpha-aminoacyl-tRNA + H2O = an N-acyl-L-amino acid + a tRNA + H(+). Hydrolyzes ribosome-free peptidyl-tRNAs (with 1 or more amino acids incorporated), which drop off the ribosome during protein synthesis, or as a result of ribosome stalling. Functionally, catalyzes the release of premature peptidyl moieties from peptidyl-tRNA molecules trapped in stalled 50S ribosomal subunits, and thus maintains levels of free tRNAs and 50S ribosomes. The polypeptide is Peptidyl-tRNA hydrolase (Sphingopyxis alaskensis (strain DSM 13593 / LMG 18877 / RB2256) (Sphingomonas alaskensis)).